A 704-amino-acid polypeptide reads, in one-letter code: Glycine--tRNA ligase beta subunit (704 aa).

It belongs to the class-II aminoacyl-tRNA synthetase family. As to quaternary structure, tetramer of two alpha and two beta subunits.

Its subcellular location is the cytoplasm. It carries out the reaction tRNA(Gly) + glycine + ATP = glycyl-tRNA(Gly) + AMP + diphosphate. The chain is Glycine--tRNA ligase beta subunit from Delftia acidovorans (strain DSM 14801 / SPH-1).